A 637-amino-acid polypeptide reads, in one-letter code: MGGSSKTVRKLEVATPVPADIDIANAVEPLHIADIAADLNLSPRHYDLYGKYKAKVLLSVLDEVQETQDGYYVVVGGITPTPLGEGKSTTTVGLCQALGAFLDKKVVTCLRQPSQGPTFGIKGGAAGGGYSQVIPMDEFNLHLTGDIHAITASNNLLAAAIDTRMFHESTQSDKALFNRLCPPNKEGKRTFCNIMHRRLKKLGIDKTNPDDLTPEEVTKFARLDIDPDSITWRRVMDVNDRFLRKISVGQGPDEKGMVRETGFDISVASEIMAVLALTTSLADMRERLGKMVIGNSKAGEPITADDLGLGGALTVLMKDAINPTLMQTLEGTPVLVHAGPFANIAHGNSSIVADKIALKLVGPGGFVVTEAGFGSDIGTEKFMNIKCRYSGLTPQCAIVVATVRALKMHGGGPQVVAGKPLDRAYLTENVGLVEAGCVNLARHIINTKAYGSNVVVAINMFSSDTEAELNAVKKAAMDAGAFDAVICTHHAHGGKGAVDLGIAVQKACENVTQPLRFLYPLDISIKEKIEAIAKSYGAAGVEYSEQAEKKIEMYSKQGFSNLPICMAKTQYSFSHNAAEKGAPSGFILPIRDVRGSIGAGFIYPLVGTMSTMPGLPTRPCFFDIDLDTTTGKVIGLS.

81–88 (TPLGEGKS) contributes to the ATP binding site.

Belongs to the formate--tetrahydrofolate ligase family. Homodimer.

The catalysed reaction is (6S)-5,6,7,8-tetrahydrofolate + formate + ATP = (6R)-10-formyltetrahydrofolate + ADP + phosphate. Its pathway is one-carbon metabolism; tetrahydrofolate interconversion. The sequence is that of Formate--tetrahydrofolate ligase from Spinacia oleracea (Spinach).